The primary structure comprises 232 residues: Protein TIFY 10c (232 aa).

The segment at 54–73 (PPAAGAGGAFRPPPTTMNLL) is disordered. The Tify domain maps to 114–149 (AGEKAQQLTIFYGGKVVVFENFPSTKVKDLLQIVST). The disordered stretch occupies residues 152–177 (GVDKNTGTAATQSLPRPAHNSLPDLP). Positions 156–165 (NTGTAATQSL) are enriched in polar residues. The Jas motif lies at 177–202 (PIARRNSLHRFLEKRKGRMNANAPYQ). Residues 179–186 (ARRNSLHR) carry the Nuclear localization signal motif.

Belongs to the TIFY/JAZ family. Interacts with BHLH148. Interacts with COI1B in a coronatine-dependent manner. Coronatine is an analog of jasmonoyl isoleucine (JA-Ile). Interacts with TIFY5/JAZ2, TIFY6B/JAZ4, TIFY9/JAZ5, TIFY11A, TIFY11D/JAZ12, TIFY11G/JAZ15 and NINJA1. Ubiquitinated. Increase in jasmonoyl isoleucine (JA-Ile) levels mediates its degradation via COI1B-mediated proteasome pathway.

It is found in the nucleus. The protein resides in the cytoplasm. It localises to the cytosol. Its function is as follows. Repressor of jasmonate (JA) responses. Acts as a repressor of JA-induced resistance to the bacterial blight pathogen Xanthomonas oryzae pv. oryzae (Xoo). Regulates JA-induced accumulation of linalool at the transcriptional level of linalool synthase gene LIS. Linalool is important for resistance to bacterial blight pathogen Xoo. The chain is Protein TIFY 10c from Oryza sativa subsp. japonica (Rice).